The following is a 203-amino-acid chain: Protein GrpE 2 (203 aa).

Basic and acidic residues predominate over residues 1–12 (MPTRPQEPDRAA). Residues 1–64 (MPTRPQEPDR…APAEDEYTTA (64 aa)) form a disordered region. Over residues 45–56 (GEPGPDAAGPAP) the composition is skewed to low complexity.

Belongs to the GrpE family. As to quaternary structure, homodimer.

It is found in the cytoplasm. Its function is as follows. Participates actively in the response to hyperosmotic and heat shock by preventing the aggregation of stress-denatured proteins, in association with DnaK and GrpE. It is the nucleotide exchange factor for DnaK and may function as a thermosensor. Unfolded proteins bind initially to DnaJ; upon interaction with the DnaJ-bound protein, DnaK hydrolyzes its bound ATP, resulting in the formation of a stable complex. GrpE releases ADP from DnaK; ATP binding to DnaK triggers the release of the substrate protein, thus completing the reaction cycle. Several rounds of ATP-dependent interactions between DnaJ, DnaK and GrpE are required for fully efficient folding. The protein is Protein GrpE 2 of Streptomyces avermitilis (strain ATCC 31267 / DSM 46492 / JCM 5070 / NBRC 14893 / NCIMB 12804 / NRRL 8165 / MA-4680).